A 348-amino-acid polypeptide reads, in one-letter code: Tetraacyldisaccharide 4'-kinase (348 aa).

Residue 65–72 participates in ATP binding; that stretch reads VAGGAGKT. The tract at residues 89 to 117 is disordered; sequence PGIVSRGHGSREREARPVSADSTAQSVGD.

The protein belongs to the LpxK family.

It catalyses the reaction a lipid A disaccharide + ATP = a lipid IVA + ADP + H(+). It functions in the pathway glycolipid biosynthesis; lipid IV(A) biosynthesis; lipid IV(A) from (3R)-3-hydroxytetradecanoyl-[acyl-carrier-protein] and UDP-N-acetyl-alpha-D-glucosamine: step 6/6. Functionally, transfers the gamma-phosphate of ATP to the 4'-position of a tetraacyldisaccharide 1-phosphate intermediate (termed DS-1-P) to form tetraacyldisaccharide 1,4'-bis-phosphate (lipid IVA). The chain is Tetraacyldisaccharide 4'-kinase from Leptothrix cholodnii (strain ATCC 51168 / LMG 8142 / SP-6) (Leptothrix discophora (strain SP-6)).